We begin with the raw amino-acid sequence, 231 residues long: NADH-ubiquinone oxidoreductase chain 4 (231 aa).

The next 6 helical transmembrane spans lie at 1 to 21 (PIAG…YGII), 34 to 54 (VFLP…LTCL), 61 to 80 (SLIA…AIMI), 84 to 106 (WGLS…LFCL), 118 to 138 (ILIL…WWLL), and 169 to 189 (TIIL…HMFL).

Belongs to the complex I subunit 4 family.

It localises to the mitochondrion membrane. It carries out the reaction a ubiquinone + NADH + 5 H(+)(in) = a ubiquinol + NAD(+) + 4 H(+)(out). Its function is as follows. Core subunit of the mitochondrial membrane respiratory chain NADH dehydrogenase (Complex I) that is believed to belong to the minimal assembly required for catalysis. Complex I functions in the transfer of electrons from NADH to the respiratory chain. The immediate electron acceptor for the enzyme is believed to be ubiquinone. The protein is NADH-ubiquinone oxidoreductase chain 4 (MT-ND4) of Porthidium nasutum (Hognosed pitviper).